A 243-amino-acid chain; its full sequence is GTP cyclohydrolase 1 type 2 (243 aa).

Positions 63, 64, 102, 209, and 213 each coordinate a divalent metal cation.

This sequence belongs to the GTP cyclohydrolase I type 2/NIF3 family. Homohexamer.

It catalyses the reaction GTP + H2O = 7,8-dihydroneopterin 3'-triphosphate + formate + H(+). It participates in cofactor biosynthesis; 7,8-dihydroneopterin triphosphate biosynthesis; 7,8-dihydroneopterin triphosphate from GTP: step 1/1. Its function is as follows. Converts GTP to dihydroneopterin triphosphate. This chain is GTP cyclohydrolase 1 type 2, found in Helicobacter pylori (strain J99 / ATCC 700824) (Campylobacter pylori J99).